Here is a 365-residue protein sequence, read N- to C-terminus: Histidinol-phosphate aminotransferase (365 aa).

Lys-221 carries the post-translational modification N6-(pyridoxal phosphate)lysine.

Belongs to the class-II pyridoxal-phosphate-dependent aminotransferase family. Histidinol-phosphate aminotransferase subfamily. Homodimer. It depends on pyridoxal 5'-phosphate as a cofactor.

It carries out the reaction L-histidinol phosphate + 2-oxoglutarate = 3-(imidazol-4-yl)-2-oxopropyl phosphate + L-glutamate. Its pathway is amino-acid biosynthesis; L-histidine biosynthesis; L-histidine from 5-phospho-alpha-D-ribose 1-diphosphate: step 7/9. This is Histidinol-phosphate aminotransferase from Nitrobacter hamburgensis (strain DSM 10229 / NCIMB 13809 / X14).